The following is a 434-amino-acid chain: Chaperone SurA (434 aa).

Residues 1–22 form the signal peptide; the sequence is MKKWKSSLLGIAIWSLAASSMA. PpiC domains follow at residues 173–274 and 283–383; these read TVQF…KVND and VTEV…EVLD.

It is found in the periplasm. It carries out the reaction [protein]-peptidylproline (omega=180) = [protein]-peptidylproline (omega=0). In terms of biological role, chaperone involved in the correct folding and assembly of outer membrane proteins. Recognizes specific patterns of aromatic residues and the orientation of their side chains, which are found more frequently in integral outer membrane proteins. May act in both early periplasmic and late outer membrane-associated steps of protein maturation. The protein is Chaperone SurA of Photobacterium profundum (strain SS9).